The chain runs to 327 residues: Putative ABC transporter ATP-binding protein MM_0887 (327 aa).

The disordered stretch occupies residues 1 to 44 (MSKSTPLKSSIIRADLPEQAEGRTGPETGKDPEKTGNSEGKTDT). Over residues 28–44 (TGKDPEKTGNSEGKTDT) the composition is skewed to basic and acidic residues. The ABC transporter domain maps to 47-282 (IEIKDLCHRY…PALLRKAHLR (236 aa)). An ATP-binding site is contributed by 81–88 (GANGAGKS).

Belongs to the ABC transporter superfamily.

It localises to the cell membrane. Its function is as follows. Probably part of an ABC transporter complex. Responsible for energy coupling to the transport system. The sequence is that of Putative ABC transporter ATP-binding protein MM_0887 from Methanosarcina mazei (strain ATCC BAA-159 / DSM 3647 / Goe1 / Go1 / JCM 11833 / OCM 88) (Methanosarcina frisia).